The primary structure comprises 163 residues: Putative 4-hydroxy-4-methyl-2-oxoglutarate aldolase (163 aa).

Substrate contacts are provided by residues 76 to 79 (GDML) and arginine 98. Aspartate 99 lines the a divalent metal cation pocket.

The protein belongs to the class II aldolase/RraA-like family. Homotrimer. A divalent metal cation is required as a cofactor.

The catalysed reaction is 4-hydroxy-4-methyl-2-oxoglutarate = 2 pyruvate. It carries out the reaction oxaloacetate + H(+) = pyruvate + CO2. Functionally, catalyzes the aldol cleavage of 4-hydroxy-4-methyl-2-oxoglutarate (HMG) into 2 molecules of pyruvate. Also contains a secondary oxaloacetate (OAA) decarboxylase activity due to the common pyruvate enolate transition state formed following C-C bond cleavage in the retro-aldol and decarboxylation reactions. The polypeptide is Putative 4-hydroxy-4-methyl-2-oxoglutarate aldolase (Pseudomonas putida (strain GB-1)).